Consider the following 461-residue polypeptide: UDP-N-acetylmuramoylalanine--D-glutamate ligase (461 aa).

Residue 123–129 coordinates ATP; that stretch reads GTNGKTT.

It belongs to the MurCDEF family.

It localises to the cytoplasm. The enzyme catalyses UDP-N-acetyl-alpha-D-muramoyl-L-alanine + D-glutamate + ATP = UDP-N-acetyl-alpha-D-muramoyl-L-alanyl-D-glutamate + ADP + phosphate + H(+). It functions in the pathway cell wall biogenesis; peptidoglycan biosynthesis. Its function is as follows. Cell wall formation. Catalyzes the addition of glutamate to the nucleotide precursor UDP-N-acetylmuramoyl-L-alanine (UMA). This chain is UDP-N-acetylmuramoylalanine--D-glutamate ligase, found in Natranaerobius thermophilus (strain ATCC BAA-1301 / DSM 18059 / JW/NM-WN-LF).